Reading from the N-terminus, the 506-residue chain is Chaperone SurA (506 aa).

The N-terminal stretch at 1–29 is a signal peptide; it reads MMRRLHSSRRFSGSLLALALGLALPLAHA. PpiC domains are found at residues 219 to 320 and 351 to 450; these read PVML…KVLQ and VTQT…QVLE.

The protein localises to the periplasm. The enzyme catalyses [protein]-peptidylproline (omega=180) = [protein]-peptidylproline (omega=0). Functionally, chaperone involved in the correct folding and assembly of outer membrane proteins. Recognizes specific patterns of aromatic residues and the orientation of their side chains, which are found more frequently in integral outer membrane proteins. May act in both early periplasmic and late outer membrane-associated steps of protein maturation. In Bordetella avium (strain 197N), this protein is Chaperone SurA.